The primary structure comprises 211 residues: 3-demethoxyubiquinol 3-hydroxylase (211 aa).

Residues Glu-60, Glu-90, His-93, Glu-142, Glu-174, and His-177 each contribute to the Fe cation site.

The protein belongs to the COQ7 family. The cofactor is Fe cation.

Its subcellular location is the cell membrane. The catalysed reaction is a 5-methoxy-2-methyl-3-(all-trans-polyprenyl)benzene-1,4-diol + AH2 + O2 = a 3-demethylubiquinol + A + H2O. Its pathway is cofactor biosynthesis; ubiquinone biosynthesis. Functionally, catalyzes the hydroxylation of 2-nonaprenyl-3-methyl-6-methoxy-1,4-benzoquinol during ubiquinone biosynthesis. The sequence is that of 3-demethoxyubiquinol 3-hydroxylase from Herminiimonas arsenicoxydans.